A 589-amino-acid polypeptide reads, in one-letter code: DNA mismatch repair protein MutL (589 aa).

Disordered regions lie at residues 330 to 355 (LQRR…SHRE) and 374 to 394 (RIYE…SEPT). Basic and acidic residues predominate over residues 331 to 341 (QRREAPQRPEP). A compositionally biased stretch (pro residues) spans 381–390 (PYRPPEPPAA).

It belongs to the DNA mismatch repair MutL/HexB family.

Its function is as follows. This protein is involved in the repair of mismatches in DNA. It is required for dam-dependent methyl-directed DNA mismatch repair. May act as a 'molecular matchmaker', a protein that promotes the formation of a stable complex between two or more DNA-binding proteins in an ATP-dependent manner without itself being part of a final effector complex. The protein is DNA mismatch repair protein MutL of Trichlorobacter lovleyi (strain ATCC BAA-1151 / DSM 17278 / SZ) (Geobacter lovleyi).